Consider the following 883-residue polypeptide: Translation initiation factor IF-2 (883 aa).

2 disordered regions span residues 52–102 and 115–297; these read KGRD…VNVE and VEAE…PTQP. Composition is skewed to basic and acidic residues over residues 115-179 and 204-237; these read VEAE…REAT and AAEK…ERAA. Residues 239 to 248 are compositionally biased toward low complexity; the sequence is KTGATAPAAK. The span at 265 to 275 shows a compositional bias: basic residues; that stretch reads PGRRGGKKGGR. The span at 276–285 shows a compositional bias: low complexity; it reads RAASGGEAAK. Residues 383 to 550 form the tr-type G domain; sequence PRPPVVTVMG…AILLQAELME (168 aa). The interval 392–399 is G1; sequence GHVDHGKT. 392–399 is a binding site for GTP; the sequence is GHVDHGKT. A G2 region spans residues 417-421; sequence GITQH. Residues 438–441 form a G3 region; it reads DTPG. GTP-binding positions include 438–442 and 492–495; these read DTPGH and NKID. Residues 492–495 form a G4 region; it reads NKID. The segment at 528-530 is G5; sequence SAK.

It belongs to the TRAFAC class translation factor GTPase superfamily. Classic translation factor GTPase family. IF-2 subfamily.

It localises to the cytoplasm. In terms of biological role, one of the essential components for the initiation of protein synthesis. Protects formylmethionyl-tRNA from spontaneous hydrolysis and promotes its binding to the 30S ribosomal subunits. Also involved in the hydrolysis of GTP during the formation of the 70S ribosomal complex. The sequence is that of Translation initiation factor IF-2 from Alkalilimnicola ehrlichii (strain ATCC BAA-1101 / DSM 17681 / MLHE-1).